We begin with the raw amino-acid sequence, 495 residues long: Regulator of G-protein signaling 7 (495 aa).

One can recognise a DEP domain in the interval 37-112 (EKNGIPIRTV…DDGTFYRFQT (76 aa)). Phosphoserine is present on residues Ser-229 and Ser-241. The segment at 235–256 (NDIRSHSPTHTPTPETKPPTED) is disordered. At Thr-243 the chain carries Phosphothreonine. One can recognise a G protein gamma domain in the interval 255-316 (EDELQQQIKY…LSDDTTFWEL (62 aa)). Residues 333 to 448 (GMDEALKDPV…IRSSAYQELL (116 aa)) form the RGS domain. Ser-434 is modified (phosphoserine).

In terms of assembly, interacts with GNB5, forming the RGS7-GNB5 complex. Interacts with GPR158; promotes the GTPase activator activity of the RGS7-GNB5 complex in absence of glycine, in contrast GTPase activator activity of the RGS7-GNB5 complex is inhibited in presence of glycine. Interacts with GPR179. Interacts with PKD1; this prevents rapid proteasomal degradation. Interacts with RGS7BP, leading to regulate the subcellular location of the heterodimer formed with GNB5. Interacts (phosphorylated form) with 14-3-3 protein YWHAQ. Interacts with SNAPIN. Interacts with GNAI1. Interacts with GNAO1, GNAI3 and GNAZ. In terms of processing, palmitoylated. Post-translationally, ubiquitinated, leading to rapid proteasomal degradation. Phosphorylation and subsequent interaction with 14-3-3 proteins inhibits GAP activity.

Its subcellular location is the cytoplasm. It is found in the cytosol. The protein localises to the cell membrane. It localises to the membrane. Its function is as follows. GTPase activator component of the RGS7-GNB5 complex that regulates G protein-coupled receptor signaling cascades. The RGS7-GNB5 complex acts as an inhibitor signal transduction by promoting the GTPase activity of G protein alpha subunits, such as GNAO1, thereby driving them into their inactive GDP-bound form. May play a role in synaptic vesicle exocytosis. Glycine-dependent regulation of the RGS7-GNB5 complex by GPR158 affects mood and cognition via its ability to regulate neuronal excitability in L2/L3 pyramidal neurons of the prefrontal cortex. Modulates the activity of potassium channels that are activated by GNAO1 in response to muscarinic acetylcholine receptor M2/CHRM2 signaling. This is Regulator of G-protein signaling 7 (RGS7) from Homo sapiens (Human).